A 216-amino-acid chain; its full sequence is Protein Syd (216 aa).

The protein belongs to the Syd family.

The protein localises to the cell inner membrane. Its function is as follows. Interacts with the SecY protein in vivo. May bind preferentially to an uncomplexed state of SecY, thus functioning either as a chelating agent for excess SecY in the cell or as a regulatory factor that negatively controls the translocase function. The sequence is that of Protein Syd from Shewanella sp. (strain W3-18-1).